The sequence spans 694 residues: uncharacterized protein (694 aa).

In terms of domain architecture, Resolvase/invertase-type recombinase catalytic spans 17 to 168 (DAFLYVRQSS…GGILNKARRG (152 aa)). Ser-25 (O-(5'-phospho-DNA)-serine intermediate) is an active-site residue. The recombinase DNA-binding region spans 175–316 (PIGLVYTPDA…QAALEQNATG (142 aa)). A helical transmembrane segment spans residues 386–406 (AVSALLLEVMAPAAIDVALAV).

It localises to the membrane. This is an uncharacterized protein from Sinorhizobium fredii (strain NBRC 101917 / NGR234).